The primary structure comprises 740 residues: 1,4-alpha-glucan branching enzyme GlgB (740 aa).

Asp414 (nucleophile) is an active-site residue. Glu467 (proton donor) is an active-site residue.

It belongs to the glycosyl hydrolase 13 family. GlgB subfamily. In terms of assembly, monomer.

The enzyme catalyses Transfers a segment of a (1-&gt;4)-alpha-D-glucan chain to a primary hydroxy group in a similar glucan chain.. Its pathway is glycan biosynthesis; glycogen biosynthesis. In terms of biological role, catalyzes the formation of the alpha-1,6-glucosidic linkages in glycogen by scission of a 1,4-alpha-linked oligosaccharide from growing alpha-1,4-glucan chains and the subsequent attachment of the oligosaccharide to the alpha-1,6 position. The protein is 1,4-alpha-glucan branching enzyme GlgB of Rhodospirillum rubrum (strain ATCC 11170 / ATH 1.1.1 / DSM 467 / LMG 4362 / NCIMB 8255 / S1).